The primary structure comprises 62 residues: MSDKCGNCDCADKSQCVKKGTSYGVVIVEAEKSHFEEVAAGEENGGCKCGTSCSCTDCKCGK.

It belongs to the metallothionein superfamily. Type 15 family.

Metallothioneins have a high content of cysteine residues that bind various heavy metals. In Oryza sativa subsp. indica (Rice), this protein is Metallothionein-like protein 3A (MT3A).